The primary structure comprises 305 residues: tRNA uridine(34) hydroxylase (305 aa).

One can recognise a Rhodanese domain in the interval 125–219 (ADENTVVVDT…YLEEVPREQS (95 aa)). Cys179 functions as the Cysteine persulfide intermediate in the catalytic mechanism.

This sequence belongs to the TrhO family.

The catalysed reaction is uridine(34) in tRNA + AH2 + O2 = 5-hydroxyuridine(34) in tRNA + A + H2O. Functionally, catalyzes oxygen-dependent 5-hydroxyuridine (ho5U) modification at position 34 in tRNAs. This Brucella canis (strain ATCC 23365 / NCTC 10854 / RM-666) protein is tRNA uridine(34) hydroxylase.